Here is a 1436-residue protein sequence, read N- to C-terminus: DNA-directed RNA polymerase subunit beta (1436 aa).

The protein belongs to the RNA polymerase beta chain family. The RNAP catalytic core consists of 2 alpha, 1 beta, 1 beta' and 1 omega subunit. When a sigma factor is associated with the core the holoenzyme is formed, which can initiate transcription.

It carries out the reaction RNA(n) + a ribonucleoside 5'-triphosphate = RNA(n+1) + diphosphate. DNA-dependent RNA polymerase catalyzes the transcription of DNA into RNA using the four ribonucleoside triphosphates as substrates. The chain is DNA-directed RNA polymerase subunit beta from Wolbachia pipientis.